The primary structure comprises 165 residues: Large ribosomal subunit protein uL10 (165 aa).

This sequence belongs to the universal ribosomal protein uL10 family. In terms of assembly, part of the ribosomal stalk of the 50S ribosomal subunit. The N-terminus interacts with L11 and the large rRNA to form the base of the stalk. The C-terminus forms an elongated spine to which L12 dimers bind in a sequential fashion forming a multimeric L10(L12)X complex.

Functionally, forms part of the ribosomal stalk, playing a central role in the interaction of the ribosome with GTP-bound translation factors. The protein is Large ribosomal subunit protein uL10 of Cronobacter sakazakii (strain ATCC BAA-894) (Enterobacter sakazakii).